We begin with the raw amino-acid sequence, 198 residues long: Recombination protein RecR (198 aa).

The C4-type zinc-finger motif lies at 57–72; sequence CSVCGHITDKDPCYIC. The region spanning 80–175 is the Toprim domain; it reads SVICVVQESK…KVTRIAHGLP (96 aa).

The protein belongs to the RecR family.

Its function is as follows. May play a role in DNA repair. It seems to be involved in an RecBC-independent recombinational process of DNA repair. It may act with RecF and RecO. This Listeria monocytogenes serotype 4b (strain CLIP80459) protein is Recombination protein RecR.